Here is a 574-residue protein sequence, read N- to C-terminus: Protein SIX6OS1 (574 aa).

The segment at 259 to 313 is disordered; it reads KDEQVSNRSSQNSQLLLPCESQKFVRNMNSSEARVTDKKEESSANQSKFVRSDVR. Residues 264–275 show a composition bias toward low complexity; it reads SNRSSQNSQLLL. The residue at position 427 (Thr-427) is a Phosphothreonine. Phosphoserine is present on Ser-430. The disordered stretch occupies residues 549–574; the sequence is QDPSTMTSSSSKDFSSSQNKTQFMFF. Residues 552 to 565 show a composition bias toward low complexity; sequence STMTSSSSKDFSSS.

In terms of assembly, interacts with SYCE1. Interacts with proteasome subunit PSMA8; to participate in meiosis progression during spermatogenesis. Most abundantly expressed in testis. Also expressed in retina and skeletal muscle.

The protein resides in the chromosome. Functionally, meiotic protein that localizes to the central element of the synaptonemal complex and is required for chromosome synapsis during meiotic recombination. Required for the appropriate processing of intermediate recombination nodules before crossover formation. The chain is Protein SIX6OS1 (Six6os1) from Mus musculus (Mouse).